We begin with the raw amino-acid sequence, 506 residues long: Zinc finger protein 157 (506 aa).

Residues 27 to 98 (VSFEDVAVDF…EEESSGHGYS (72 aa)) form the KRAB domain. 12 C2H2-type zinc fingers span residues 162 to 184 (FECH…LRIH), 190 to 212 (YECG…QKTH), 218 to 240 (FECN…TRTH), 246 to 268 (YECT…QRTH), 274 to 296 (YECS…HRTH), 302 to 324 (YECG…QRIH), 330 to 352 (YECG…QRTH), 358 to 380 (YQCN…QRIH), 386 to 408 (YECN…QRMH), 414 to 436 (YECS…RRTH), 442 to 464 (YECS…QRIH), and 470 to 492 (FECQ…QRTH).

This sequence belongs to the krueppel C2H2-type zinc-finger protein family.

The protein localises to the nucleus. Functionally, may be involved in transcriptional regulation. The sequence is that of Zinc finger protein 157 (ZNF157) from Homo sapiens (Human).